We begin with the raw amino-acid sequence, 85 residues long: Small ribosomal subunit protein bS18c (85 aa).

It belongs to the bacterial ribosomal protein bS18 family. In terms of assembly, part of the 30S ribosomal subunit.

It is found in the plastid. It localises to the chloroplast. This Zygnema circumcarinatum (Green alga) protein is Small ribosomal subunit protein bS18c.